The sequence spans 201 residues: Adenylyl-sulfate kinase (201 aa).

Gly-35–Ser-42 provides a ligand contact to ATP. Ser-109 (phosphoserine intermediate) is an active-site residue.

It belongs to the APS kinase family.

The enzyme catalyses adenosine 5'-phosphosulfate + ATP = 3'-phosphoadenylyl sulfate + ADP + H(+). The protein operates within sulfur metabolism; hydrogen sulfide biosynthesis; sulfite from sulfate: step 2/3. Catalyzes the synthesis of activated sulfate. In Salmonella gallinarum (strain 287/91 / NCTC 13346), this protein is Adenylyl-sulfate kinase.